A 37-amino-acid polypeptide reads, in one-letter code: Photosystem I reaction center subunit VIII (37 aa).

Residues 9 to 29 (SILVTLVGLVFPAFAMASLFL) traverse the membrane as a helical segment.

It belongs to the PsaI family.

It is found in the plastid. The protein resides in the chloroplast thylakoid membrane. Functionally, may help in the organization of the PsaL subunit. The sequence is that of Photosystem I reaction center subunit VIII from Pelargonium hortorum (Common geranium).